A 187-amino-acid chain; its full sequence is Elongation factor P (187 aa).

This sequence belongs to the elongation factor P family.

The protein localises to the cytoplasm. The protein operates within protein biosynthesis; polypeptide chain elongation. Involved in peptide bond synthesis. Stimulates efficient translation and peptide-bond synthesis on native or reconstituted 70S ribosomes in vitro. Probably functions indirectly by altering the affinity of the ribosome for aminoacyl-tRNA, thus increasing their reactivity as acceptors for peptidyl transferase. In Azobacteroides pseudotrichonymphae genomovar. CFP2, this protein is Elongation factor P.